The primary structure comprises 360 residues: uncharacterized protein (360 aa).

The segment at 193–245 is disordered; it reads SRHTRPKGQPLSSPKKNSGSAARPSTAIGLCRRSQTPGALQSTGPSNTELEPE. Composition is skewed to polar residues over residues 202–212 and 225–241; these read PLSSPKKNSGS and RSQT…SNTE.

This is an uncharacterized protein from Homo sapiens (Human).